A 98-amino-acid polypeptide reads, in one-letter code: snRNA-activating protein complex subunit 5 (98 aa).

Residues 75–98 (ALELSTRSHVQEEEEEEEEEEEDS) form a disordered region. The span at 86-98 (EEEEEEEEEEEDS) shows a compositional bias: acidic residues.

As to quaternary structure, part of the SNAPc complex composed of 5 subunits: SNAPC1, SNAPC2, SNAPC3, SNAPC4 and SNAPC5. SNAPC5 interacts with SNAPC4.

The protein resides in the nucleus. Its function is as follows. Part of the SNAPc complex required for the transcription of both RNA polymerase II and III small-nuclear RNA genes. Binds to the proximal sequence element (PSE), a non-TATA-box basal promoter element common to these 2 types of genes. Recruits TBP and BRF2 to the U6 snRNA TATA box. This Bos taurus (Bovine) protein is snRNA-activating protein complex subunit 5 (SNAPC5).